A 174-amino-acid polypeptide reads, in one-letter code: MSLNRNEKEAVVAQVSAQVAKAQTLALAEYRGLTVEHLNALRKQAREKGVYLHVLKNTLARRAVAGTSFEVAAGSMAGPLIYGFSEDAVAAAKVIADFAKGNDKLVIKAGAYAGKALDAEGVKALASIPSKEVLLSQLLGLMQSPVSRIARVLAALAEQRGGSAEAAPAEAAAA.

It belongs to the universal ribosomal protein uL10 family. Part of the ribosomal stalk of the 50S ribosomal subunit. The N-terminus interacts with L11 and the large rRNA to form the base of the stalk. The C-terminus forms an elongated spine to which L12 dimers bind in a sequential fashion forming a multimeric L10(L12)X complex.

Forms part of the ribosomal stalk, playing a central role in the interaction of the ribosome with GTP-bound translation factors. This is Large ribosomal subunit protein uL10 from Methylibium petroleiphilum (strain ATCC BAA-1232 / LMG 22953 / PM1).